The primary structure comprises 197 residues: NAD(P)H-quinone oxidoreductase subunit 6, chloroplastic (197 aa).

The next 5 membrane-spanning stretches (helical) occupy residues F10 to V30, L39 to A59, A60 to I80, I94 to I114, and L147 to V167.

Belongs to the complex I subunit 6 family. NDH is composed of at least 16 different subunits, 5 of which are encoded in the nucleus.

The protein localises to the plastid. It is found in the chloroplast thylakoid membrane. The enzyme catalyses a plastoquinone + NADH + (n+1) H(+)(in) = a plastoquinol + NAD(+) + n H(+)(out). The catalysed reaction is a plastoquinone + NADPH + (n+1) H(+)(in) = a plastoquinol + NADP(+) + n H(+)(out). In terms of biological role, NDH shuttles electrons from NAD(P)H:plastoquinone, via FMN and iron-sulfur (Fe-S) centers, to quinones in the photosynthetic chain and possibly in a chloroplast respiratory chain. The immediate electron acceptor for the enzyme in this species is believed to be plastoquinone. Couples the redox reaction to proton translocation, and thus conserves the redox energy in a proton gradient. The polypeptide is NAD(P)H-quinone oxidoreductase subunit 6, chloroplastic (ndhG) (Adiantum capillus-veneris (Maidenhair fern)).